Reading from the N-terminus, the 161-residue chain is MPSFDVVCEPDMIELKNAIEQSNKEITNRFDFKGSDSRVEQKDEALILFGDDDFKLGQVRDVLINKMAKRNVDVRYLKDDKTETISGDKRKQTMKIQKGITSELAKKVVRIIKDSKIKVQASIQGDAVRVTGGKRDDLQETMALLKKEVTEAPLGFNNFRD.

It belongs to the YajQ family.

Nucleotide-binding protein. The protein is Nucleotide-binding protein Pnec_0318 of Polynucleobacter necessarius subsp. necessarius (strain STIR1).